The following is a 239-amino-acid chain: UDP-2,3-diacylglucosamine hydrolase (239 aa).

Positions 9, 11, 42, 80, and 115 each coordinate Mn(2+). 80 to 81 (NR) is a binding site for substrate. Substrate is bound by residues aspartate 123, serine 161, lysine 165, lysine 168, and histidine 196. Histidine 196 and histidine 198 together coordinate Mn(2+).

It belongs to the LpxH family. Requires Mn(2+) as cofactor.

It localises to the cell inner membrane. The catalysed reaction is UDP-2-N,3-O-bis[(3R)-3-hydroxytetradecanoyl]-alpha-D-glucosamine + H2O = 2-N,3-O-bis[(3R)-3-hydroxytetradecanoyl]-alpha-D-glucosaminyl 1-phosphate + UMP + 2 H(+). Its pathway is glycolipid biosynthesis; lipid IV(A) biosynthesis; lipid IV(A) from (3R)-3-hydroxytetradecanoyl-[acyl-carrier-protein] and UDP-N-acetyl-alpha-D-glucosamine: step 4/6. Hydrolyzes the pyrophosphate bond of UDP-2,3-diacylglucosamine to yield 2,3-diacylglucosamine 1-phosphate (lipid X) and UMP by catalyzing the attack of water at the alpha-P atom. Involved in the biosynthesis of lipid A, a phosphorylated glycolipid that anchors the lipopolysaccharide to the outer membrane of the cell. In Pasteurella multocida (strain Pm70), this protein is UDP-2,3-diacylglucosamine hydrolase.